A 509-amino-acid chain; its full sequence is ATP synthase subunit alpha (509 aa).

169 to 176 provides a ligand contact to ATP; sequence GDRQTGKT.

The protein belongs to the ATPase alpha/beta chains family. As to quaternary structure, F-type ATPases have 2 components, CF(1) - the catalytic core - and CF(0) - the membrane proton channel. CF(1) has five subunits: alpha(3), beta(3), gamma(1), delta(1), epsilon(1). CF(0) has three main subunits: a(1), b(2) and c(9-12). The alpha and beta chains form an alternating ring which encloses part of the gamma chain. CF(1) is attached to CF(0) by a central stalk formed by the gamma and epsilon chains, while a peripheral stalk is formed by the delta and b chains.

It localises to the cell inner membrane. It carries out the reaction ATP + H2O + 4 H(+)(in) = ADP + phosphate + 5 H(+)(out). Produces ATP from ADP in the presence of a proton gradient across the membrane. The alpha chain is a regulatory subunit. The protein is ATP synthase subunit alpha of Methylorubrum populi (strain ATCC BAA-705 / NCIMB 13946 / BJ001) (Methylobacterium populi).